Consider the following 1320-residue polypeptide: MIKNLRGAPALSDFRVKKLLAQCEQLQLPVNDIYAEFAHFTKLNEELSTSEEKVLQQLLTYGPTIEEHQPAGLFLLVTPRPGTISPWSSKSTDIAHNCGLAKVERLERGIAYYVTLENDAQLSTSQEAQLNTLLHDRMMESIFNDFAQASTLFASSEPGELTAIDIESGGKNALVQANIELGLALAEDEVNYLFENFTKLGRNPHDIELYMFAQANSEHCRHKIFNAEWTIDGVKQEKSLFKMIRNTHEINPDYVLSAYKDNAAVMVGNKGGRFFPNPETNVYGYNHEDIQILMKVETHNHPTAISPYPGAATGSGGEIRDEGATGIGSKPKAGLVGFSVSNLRIPDFVQPWETDFGKPSRIVTAFDIMIEGPLGGAAFNNEFGRPAILGYFRTYEEEVNSFNGKEVRGYHKPIMLAGGLGNIRDEHVQKREIIVGANLIALGGPAMNIGLGGGAASSMASGQSAESLDFASVQRENPEMERRCQEVIDKCWQLGEENPIAFIHDVGAGGLSNAFPELVADGGRGGIFELRNVPNDERSMAPHEIWCNESQERYVIAVSDKNLATFEQICQRERAPYSVVGRATEEEHLTVTDSHFSDNEKLNTPIDLPLDVLLGKTPKIYKDVKTATAAGDSLDLSTVTLADAADRILSLPTVAEKTFLITIGDRSVTGMVNRDQMVGPWQVPVADCGVTASALDSYHGEAMSLGERTPVALLNFGASARLAVAESLTNIAGTDIGDLNRIKLSANWMSPAGHPGEDAGLYEAVKAIGEELCPALGLTIPVGKDSMSMKTQWEENGEQKSVTSPLSLVITAFGVVEDIRKTVTPELRTDKGDTRLVAIDLSKGKKRLGGSCLAQVYKQLGSETPDVDDAEVLKGFFNAMQTLVRAEKVIAYHDISDGGLFTTVTEMAFAGHTGVDIDISKLSNGANDDLATLFNEELGGVIQIRESDVDAIHAILAQHGILENCTDIGRLNNEDTIRFSRDGEVVLENSRTYYRTVWAQTTYRMQSLRDNPECAQQEHDVKFDTEDPGLNTELTFDINEDIVADLIIRDAVKDAENSANDITNPRVAILREQGVNSHVEMAAAFDRAGFVAIDVHMSDILSGRADLADFNGLVACGGFSYGDVLGAGEGWAKSILFNANARTMFKTFFEREDTFTLGVCNGCQMLSNLKDIIPGSEHWPHFVQNKSERFEARFSLVEIQESPSVLFKGMEGSRMPIAVSHGEGHAEFSSDAAIDAANNSGTVSMRYVNNYGDVTETYPANPNGSVDGITSLTTTDGRVTIMMPHPERVFRTVANSWHPDSWGEDSPWVRMFRNARAFIG.

Residues 310 to 321 (GAATGSGGEIRD) and A686 each bind ATP. Residues D687, E726, N730, and D894 each contribute to the Mg(2+) site. Residue S896 participates in ATP binding. In terms of domain architecture, Glutamine amidotransferase type-1 spans 1067-1320 (VAILREQGVN…MFRNARAFIG (254 aa)). C1160 serves as the catalytic Nucleophile. Catalysis depends on residues H1285 and E1287.

In the N-terminal section; belongs to the FGAMS family. As to quaternary structure, monomer.

The protein localises to the cytoplasm. It carries out the reaction N(2)-formyl-N(1)-(5-phospho-beta-D-ribosyl)glycinamide + L-glutamine + ATP + H2O = 2-formamido-N(1)-(5-O-phospho-beta-D-ribosyl)acetamidine + L-glutamate + ADP + phosphate + H(+). It functions in the pathway purine metabolism; IMP biosynthesis via de novo pathway; 5-amino-1-(5-phospho-D-ribosyl)imidazole from N(2)-formyl-N(1)-(5-phospho-D-ribosyl)glycinamide: step 1/2. Functionally, phosphoribosylformylglycinamidine synthase involved in the purines biosynthetic pathway. Catalyzes the ATP-dependent conversion of formylglycinamide ribonucleotide (FGAR) and glutamine to yield formylglycinamidine ribonucleotide (FGAM) and glutamate. This chain is Phosphoribosylformylglycinamidine synthase, found in Colwellia psychrerythraea (strain 34H / ATCC BAA-681) (Vibrio psychroerythus).